A 150-amino-acid chain; its full sequence is Spore germination protein GerT (150 aa).

It localises to the spore coat. In terms of biological role, involved in spore germination. The polypeptide is Spore germination protein GerT (gerT) (Bacillus licheniformis (strain ATCC 14580 / DSM 13 / JCM 2505 / CCUG 7422 / NBRC 12200 / NCIMB 9375 / NCTC 10341 / NRRL NRS-1264 / Gibson 46)).